A 254-amino-acid chain; its full sequence is Protein GVQW3 (254 aa).

The polypeptide is Protein GVQW3 (Homo sapiens (Human)).